The primary structure comprises 339 residues: AB hydrolase superfamily protein B1A11.02 (339 aa).

The protein belongs to the AB hydrolase superfamily.

The sequence is that of AB hydrolase superfamily protein B1A11.02 from Schizosaccharomyces pombe (strain 972 / ATCC 24843) (Fission yeast).